A 250-amino-acid chain; its full sequence is Acetylglutamate kinase (250 aa).

Residues 41–42, Arg63, and Asn156 contribute to the substrate site; that span reads GG.

This sequence belongs to the acetylglutamate kinase family. ArgB subfamily.

The protein resides in the cytoplasm. It catalyses the reaction N-acetyl-L-glutamate + ATP = N-acetyl-L-glutamyl 5-phosphate + ADP. The protein operates within amino-acid biosynthesis; L-arginine biosynthesis; N(2)-acetyl-L-ornithine from L-glutamate: step 2/4. Catalyzes the ATP-dependent phosphorylation of N-acetyl-L-glutamate. In Listeria monocytogenes serotype 4a (strain HCC23), this protein is Acetylglutamate kinase.